The primary structure comprises 133 residues: ATP synthase epsilon chain (133 aa).

This sequence belongs to the ATPase epsilon chain family. F-type ATPases have 2 components, CF(1) - the catalytic core - and CF(0) - the membrane proton channel. CF(1) has five subunits: alpha(3), beta(3), gamma(1), delta(1), epsilon(1). CF(0) has three main subunits: a, b and c.

The protein resides in the cell membrane. Its function is as follows. Produces ATP from ADP in the presence of a proton gradient across the membrane. This is ATP synthase epsilon chain from Clostridium botulinum (strain 657 / Type Ba4).